The chain runs to 180 residues: Acireductone dioxygenase (180 aa).

4 residues coordinate Fe(2+): histidine 97, histidine 99, glutamate 103, and histidine 141. 4 residues coordinate Ni(2+): histidine 97, histidine 99, glutamate 103, and histidine 141.

The protein belongs to the acireductone dioxygenase (ARD) family. Monomer. Requires Fe(2+) as cofactor. The cofactor is Ni(2+).

The enzyme catalyses 1,2-dihydroxy-5-(methylsulfanyl)pent-1-en-3-one + O2 = 3-(methylsulfanyl)propanoate + CO + formate + 2 H(+). It carries out the reaction 1,2-dihydroxy-5-(methylsulfanyl)pent-1-en-3-one + O2 = 4-methylsulfanyl-2-oxobutanoate + formate + 2 H(+). It functions in the pathway amino-acid biosynthesis; L-methionine biosynthesis via salvage pathway; L-methionine from S-methyl-5-thio-alpha-D-ribose 1-phosphate: step 5/6. Its function is as follows. Catalyzes 2 different reactions between oxygen and the acireductone 1,2-dihydroxy-3-keto-5-methylthiopentene (DHK-MTPene) depending upon the metal bound in the active site. Fe-containing acireductone dioxygenase (Fe-ARD) produces formate and 2-keto-4-methylthiobutyrate (KMTB), the alpha-ketoacid precursor of methionine in the methionine recycle pathway. Ni-containing acireductone dioxygenase (Ni-ARD) produces methylthiopropionate, carbon monoxide and formate, and does not lie on the methionine recycle pathway. In Serratia proteamaculans (strain 568), this protein is Acireductone dioxygenase.